The sequence spans 309 residues: Glutaminase (309 aa).

7 residues coordinate substrate: serine 64, asparagine 114, glutamate 160, asparagine 167, tyrosine 191, tyrosine 243, and valine 261.

The protein belongs to the glutaminase family. Homotetramer.

It catalyses the reaction L-glutamine + H2O = L-glutamate + NH4(+). The chain is Glutaminase from Methylorubrum extorquens (strain CM4 / NCIMB 13688) (Methylobacterium extorquens).